Here is an 884-residue protein sequence, read N- to C-terminus: Blastomere cadherin (884 aa).

The N-terminal stretch at 1-26 (MGGTDKFRYPSVWLCGLLCLLQVVPS) is a signal peptide. The propeptide occupies 27-157 (INVDVSGCQP…KHTGLKRKKR (131 aa)). Cadherin domains follow at residues 158–265 (DWVI…RPKF), 266–378 (TQPV…APIF), 379–489 (DPKT…APVF), 490–595 (VPVV…DNGP), and 596–706 (VPSP…GFDL). At 158 to 706 (DWVIPPIKVS…QEKLVAGFDL (549 aa)) the chain is on the extracellular side. Asparagine 427, asparagine 560, and asparagine 683 each carry an N-linked (GlcNAc...) asparagine glycan. Residues 707-730 (PIILVILGSILALLILSLLLLLFL) traverse the membrane as a helical segment. Over 731 to 884 (KRKKVVKEPL…YGGDDDDDEE (154 aa)) the chain is Cytoplasmic.

In terms of tissue distribution, expressed in pituitary gland, lung and kidney.

The protein localises to the cell membrane. Cadherins are calcium-dependent cell adhesion proteins. They preferentially interact with themselves in a homophilic manner in connecting cells; cadherins may thus contribute to the sorting of heterogeneous cell types. The protein is Blastomere cadherin of Xenopus laevis (African clawed frog).